A 65-amino-acid chain; its full sequence is Large ribosomal subunit protein bL35 (65 aa).

The protein belongs to the bacterial ribosomal protein bL35 family.

The sequence is that of Large ribosomal subunit protein bL35 from Synechococcus sp. (strain WH7803).